Reading from the N-terminus, the 69-residue chain is Protein transport protein Sec61 subunit gamma-1 (69 aa).

Methionine 1 carries the post-translational modification N-acetylmethionine. Topologically, residues 1 to 32 (MDAIDSVVDPLRDFAKDSIRLVKRCHKPDRKE) are cytoplasmic. Residues 33-61 (FTKVAVRTAIGFVVMGFVGFFVKLIFIPI) traverse the membrane as a helical segment. Topologically, residues 62-69 (NNIIVGAT) are extracellular.

This sequence belongs to the SecE/SEC61-gamma family. As to quaternary structure, heterotrimeric complex composed of SEC61-alpha, SEC61-beta and SEC61-gamma.

The protein resides in the endoplasmic reticulum membrane. Necessary for protein translocation in the endoplasmic reticulum. The protein is Protein transport protein Sec61 subunit gamma-1 (SEC61G1) of Arabidopsis thaliana (Mouse-ear cress).